The following is a 422-amino-acid chain: Trigger factor (422 aa).

The PPIase FKBP-type domain maps to 158-242 (GDFAVVSLES…VKGLRKKELP (85 aa)).

The protein belongs to the FKBP-type PPIase family. Tig subfamily.

It is found in the cytoplasm. It carries out the reaction [protein]-peptidylproline (omega=180) = [protein]-peptidylproline (omega=0). Involved in protein export. Acts as a chaperone by maintaining the newly synthesized protein in an open conformation. Functions as a peptidyl-prolyl cis-trans isomerase. This Solibacter usitatus (strain Ellin6076) protein is Trigger factor.